Consider the following 310-residue polypeptide: ADP-L-glycero-D-manno-heptose-6-epimerase (310 aa).

Residues phenylalanine 10–isoleucine 11, aspartate 31–asparagine 32, lysine 38, lysine 53, glutamate 75–serine 79, and asparagine 92 each bind NADP(+). Tyrosine 140 serves as the catalytic Proton acceptor. Lysine 144 is a binding site for NADP(+). Asparagine 169 contributes to the substrate binding site. The NADP(+) site is built by valine 170 and lysine 178. The active-site Proton acceptor is lysine 178. Residues serine 180, histidine 187, phenylalanine 201–serine 204, arginine 209, and tyrosine 272 each bind substrate.

It belongs to the NAD(P)-dependent epimerase/dehydratase family. HldD subfamily. As to quaternary structure, homopentamer. Requires NADP(+) as cofactor.

The catalysed reaction is ADP-D-glycero-beta-D-manno-heptose = ADP-L-glycero-beta-D-manno-heptose. Its pathway is nucleotide-sugar biosynthesis; ADP-L-glycero-beta-D-manno-heptose biosynthesis; ADP-L-glycero-beta-D-manno-heptose from D-glycero-beta-D-manno-heptose 7-phosphate: step 4/4. Catalyzes the interconversion between ADP-D-glycero-beta-D-manno-heptose and ADP-L-glycero-beta-D-manno-heptose via an epimerization at carbon 6 of the heptose. The polypeptide is ADP-L-glycero-D-manno-heptose-6-epimerase (Salmonella paratyphi C (strain RKS4594)).